A 420-amino-acid chain; its full sequence is Ribosome biogenesis protein WDR12 homolog (420 aa).

Positions 10 to 92 are ubiquitin-like (UBL) domain; it reads VQVHLKTKQE…EDAIEIEYVE (83 aa). WD repeat units lie at residues 104–142, 143–185, 192–231, 250–288, 290–329, 335–375, and 379–417; these read LHDDWVSAVKARGKWILSGCYDNSLNLWTNKGKHILTIS, GHTA…NAVD, GHERGVDSVSVSPDGLRFATGSWDTMLKVWSAELDDGVEG, GHRESVSAVQWMDATTLLTGSWDYTLKVWDLSLEGIKTE, STNKSIFDASYSKLNRLILTASADKNLRLYDPRTNQGSVV, GHNA…APLY, and GHGDKVLDIDWSNPKYIVSGGVDNTVRVFKSRKALAEDT.

This sequence belongs to the WD repeat WDR12/YTM1 family.

The protein resides in the nucleus. It is found in the nucleolus. The protein localises to the nucleoplasm. In terms of biological role, required for maturation of ribosomal RNAs and formation of the large ribosomal subunit. This is Ribosome biogenesis protein WDR12 homolog from Drosophila sechellia (Fruit fly).